Here is an 877-residue protein sequence, read N- to C-terminus: Probable linoleate 9S-lipoxygenase 4 (877 aa).

Residues G38–A165 form the PLAT domain. Residues T168–I877 enclose the Lipoxygenase domain. The interval G229 to T252 is disordered. H528, H533, H719, N723, and I877 together coordinate Fe cation.

This sequence belongs to the lipoxygenase family. Requires Fe cation as cofactor.

The enzyme catalyses (9Z,12Z)-octadecadienoate + O2 = (9S)-hydroperoxy-(10E,12Z)-octadecadienoate. Its pathway is lipid metabolism; oxylipin biosynthesis. Its function is as follows. Plant lipoxygenase may be involved in a number of diverse aspects of plant physiology including growth and development, pest resistance, and senescence or responses to wounding. Catalyzes the hydroperoxidation of lipids containing a cis,cis-1,4-pentadiene structure. The chain is Probable linoleate 9S-lipoxygenase 4 from Oryza sativa subsp. japonica (Rice).